The chain runs to 79 residues: Small ribosomal subunit protein uS17 (79 aa).

Belongs to the universal ribosomal protein uS17 family. As to quaternary structure, part of the 30S ribosomal subunit.

In terms of biological role, one of the primary rRNA binding proteins, it binds specifically to the 5'-end of 16S ribosomal RNA. The chain is Small ribosomal subunit protein uS17 from Bartonella tribocorum (strain CIP 105476 / IBS 506).